A 244-amino-acid chain; its full sequence is Orotidine 5'-phosphate decarboxylase (244 aa).

Substrate is bound by residues Asp-12, Lys-34, 61-70, Thr-125, Arg-187, Gln-196, Gly-216, and Arg-217; that span reads DLKLFDIPNT. The Proton donor role is filled by Lys-63.

Belongs to the OMP decarboxylase family. Type 1 subfamily. Homodimer.

It carries out the reaction orotidine 5'-phosphate + H(+) = UMP + CO2. The protein operates within pyrimidine metabolism; UMP biosynthesis via de novo pathway; UMP from orotate: step 2/2. In terms of biological role, catalyzes the decarboxylation of orotidine 5'-monophosphate (OMP) to uridine 5'-monophosphate (UMP). The chain is Orotidine 5'-phosphate decarboxylase from Dictyoglomus thermophilum (strain ATCC 35947 / DSM 3960 / H-6-12).